Here is a 59-residue protein sequence, read N- to C-terminus: Large ribosomal subunit protein bL32 (59 aa).

Belongs to the bacterial ribosomal protein bL32 family.

This is Large ribosomal subunit protein bL32 from Lactiplantibacillus plantarum (strain ATCC BAA-793 / NCIMB 8826 / WCFS1) (Lactobacillus plantarum).